The primary structure comprises 183 residues: uncharacterized protein (183 aa).

This is an uncharacterized protein from Homo sapiens (Human).